A 481-amino-acid polypeptide reads, in one-letter code: 6-phosphogluconate dehydrogenase, decarboxylating (481 aa).

Residues 11–16 (GLAVMG), 34–36 (NRT), 76–78 (VKA), and asparagine 104 contribute to the NADP(+) site. Substrate-binding positions include asparagine 104 and 130-132 (SGG). The active-site Proton acceptor is the lysine 184. Substrate is bound at residue 187 to 188 (HN). Residue glutamate 191 is the Proton donor of the active site. Substrate contacts are provided by tyrosine 192, lysine 259, arginine 286, arginine 445, and histidine 451.

It belongs to the 6-phosphogluconate dehydrogenase family. As to quaternary structure, homodimer.

It catalyses the reaction 6-phospho-D-gluconate + NADP(+) = D-ribulose 5-phosphate + CO2 + NADPH. It functions in the pathway carbohydrate degradation; pentose phosphate pathway; D-ribulose 5-phosphate from D-glucose 6-phosphate (oxidative stage): step 3/3. Functionally, catalyzes the oxidative decarboxylation of 6-phosphogluconate to ribulose 5-phosphate and CO(2), with concomitant reduction of NADP to NADPH. This chain is 6-phosphogluconate dehydrogenase, decarboxylating (Pgd), found in Ceratitis capitata (Mediterranean fruit fly).